A 220-amino-acid chain; its full sequence is Peptidyl-tRNA hydrolase (220 aa).

Residue Y14 participates in tRNA binding. The active-site Proton acceptor is H19. Residues F60, N62, and N106 each coordinate tRNA.

It belongs to the PTH family. As to quaternary structure, monomer.

It localises to the cytoplasm. The enzyme catalyses an N-acyl-L-alpha-aminoacyl-tRNA + H2O = an N-acyl-L-amino acid + a tRNA + H(+). Hydrolyzes ribosome-free peptidyl-tRNAs (with 1 or more amino acids incorporated), which drop off the ribosome during protein synthesis, or as a result of ribosome stalling. Functionally, catalyzes the release of premature peptidyl moieties from peptidyl-tRNA molecules trapped in stalled 50S ribosomal subunits, and thus maintains levels of free tRNAs and 50S ribosomes. The protein is Peptidyl-tRNA hydrolase of Campylobacter hominis (strain ATCC BAA-381 / DSM 21671 / CCUG 45161 / LMG 19568 / NCTC 13146 / CH001A).